The chain runs to 642 residues: Nocturnin (642 aa).

A disordered region spans residues 50–87 (LEDDDKPPQLFSVTDEPPSPNEEDYKPPNHHEDDGKLA). Positions 72 to 87 (EDYKPPNHHEDDGKLA) are enriched in basic and acidic residues. Residue E363 coordinates Mg(2+). Residues E363, N430, 453–456 (HLKA), 491–493 (DFN), and H600 each bind substrate. The tract at residues 611–642 (PPTENGKESGSGSGSDGENETEVEGSKHGSIQ) is disordered.

This sequence belongs to the CCR4/nocturin family. As to quaternary structure, associates to the CCR4-NOT complex composed of at least Pop2/Caf1-55, Ccr4, Not1, Rga/Not2, and Not3. The cofactor is Mg(2+). Expressed in the head, in the dorsal neurons DN3, a subgroup of clock neurons (at protein level). Ubiquitously expressed in both males and females.

Its subcellular location is the cytoplasm. It catalyses the reaction NADP(+) + H2O = phosphate + NAD(+). It carries out the reaction NADPH + H2O = phosphate + NADH. Its function is as follows. Phosphatase which catalyzes the conversion of NADP(+) to NAD(+) and of NADPH to NADH. Shows a small preference for NADPH over NADP(+). Because of its association with the CCR4-NOT complex, has a role in mRNA deadenylation and decay. Required at the pupal stage for proper wing morphogenesis after eclosion. Doesn't have a role in light-mediated behavioral response. In terms of biological role, in dorsal neurons, contributes to the light-mediated behavioral response. The chain is Nocturnin from Drosophila melanogaster (Fruit fly).